Reading from the N-terminus, the 488-residue chain is Palmitoyltransferase ZDHHC14 (488 aa).

At 1–60 (MPPGGGGPMKDCEYSQISTHSSSPMESPHKKKKIAARRKWEVFPGRNKFFCNGRIMMARQ) the chain is on the cytoplasmic side. The chain crosses the membrane as a helical span at residues 61–81 (TGVFYLTLVLILVTSGLFFAF). At 82–89 (DCPYLAVK) the chain is on the lumenal side. The helical transmembrane segment at 90-110 (ITPAIPAVAGILFFFVMGTLL) threads the bilayer. Over 111–208 (RTSFSDPGVL…GNCVGKRNYR (98 aa)) the chain is Cytoplasmic. The region spanning 165-215 (KYCFTCKIFRPPRASHCSLCDNCVERFDHHCPWVGNCVGKRNYRFFYMFIL) is the DHHC domain. C195 acts as the S-palmitoyl cysteine intermediate in catalysis. The helical transmembrane segment at 209-229 (FFYMFILSLSFLTVFIFAFVI) threads the bilayer. The Lumenal segment spans residues 230-255 (THVILRSQQTGFLNALKDSPASVLEA). Residues 256 to 276 (VVCFFSVWSIVGLSGFHTYLI) traverse the membrane as a helical segment. Over 277–488 (SSNQTTNEDI…VRGLVKLSSV (212 aa)) the chain is Cytoplasmic. S455 bears the Phosphoserine mark.

It belongs to the DHHC palmitoyltransferase family. ERF2/ZDHHC9 subfamily. In terms of tissue distribution, widely expressed.

The protein localises to the endoplasmic reticulum membrane. Its subcellular location is the golgi apparatus. It localises to the golgi stack membrane. It carries out the reaction L-cysteinyl-[protein] + hexadecanoyl-CoA = S-hexadecanoyl-L-cysteinyl-[protein] + CoA. Functionally, palmitoyltransferase that could catalyze the addition of palmitate onto various protein substrates. May have a palmitoyltransferase activity toward the beta-2 adrenergic receptor/ADRB2 and thereby regulate G protein-coupled receptor signaling. May play a role in cell differentiation and apoptosis. The protein is Palmitoyltransferase ZDHHC14 of Homo sapiens (Human).